Reading from the N-terminus, the 81-residue chain is Translational regulator CsrA (81 aa).

Residues 59-71 show a composition bias toward polar residues; it reads SQMQHLEQGNFPT. The disordered stretch occupies residues 59–81; that stretch reads SQMQHLEQGNFPTSFDDDDFFNR.

The protein belongs to the CsrA/RsmA family. In terms of assembly, homodimer; the beta-strands of each monomer intercalate to form a hydrophobic core, while the alpha-helices form wings that extend away from the core.

It is found in the cytoplasm. Functionally, a key translational regulator that binds mRNA to regulate translation initiation and/or mRNA stability. Mediates global changes in gene expression, shifting from rapid growth to stress survival by linking envelope stress, the stringent response and the catabolite repression systems. Usually binds in the 5'-UTR; binding at or near the Shine-Dalgarno sequence prevents ribosome-binding, repressing translation, binding elsewhere in the 5'-UTR can activate translation and/or stabilize the mRNA. Its function is antagonized by small RNA(s). This Psychrobacter sp. (strain PRwf-1) protein is Translational regulator CsrA.